The chain runs to 294 residues: 4-hydroxy-tetrahydrodipicolinate synthase (294 aa).

Thr-47 is a pyruvate binding site. Residue Tyr-135 is the Proton donor/acceptor of the active site. Lys-164 serves as the catalytic Schiff-base intermediate with substrate. Pyruvate is bound at residue Val-206.

It belongs to the DapA family. Homotetramer; dimer of dimers.

It localises to the cytoplasm. The catalysed reaction is L-aspartate 4-semialdehyde + pyruvate = (2S,4S)-4-hydroxy-2,3,4,5-tetrahydrodipicolinate + H2O + H(+). It participates in amino-acid biosynthesis; L-lysine biosynthesis via DAP pathway; (S)-tetrahydrodipicolinate from L-aspartate: step 3/4. In terms of biological role, catalyzes the condensation of (S)-aspartate-beta-semialdehyde [(S)-ASA] and pyruvate to 4-hydroxy-tetrahydrodipicolinate (HTPA). The chain is 4-hydroxy-tetrahydrodipicolinate synthase from Lachnoclostridium phytofermentans (strain ATCC 700394 / DSM 18823 / ISDg) (Clostridium phytofermentans).